Consider the following 409-residue polypeptide: MQPPIPAPLKHVSRTPATPAVAKALTRLQCWPGEQRVAVGLSGGVDSSLSAALLVEAGWQVEGLTLWLMSGKGACCSDGLIDAAGICEQLKIPHHVVDSRATFQAEIVDQLVQGYQQGVTPLPCSRCNRSVKFAEMLSWAKKELQLHRVATGHYARIRHREDPEPQQALPGDSIGRHQLLRGLDQNKDQSYFLYDLSQDVLAKVIFPLGELTKAETRQEAERYGLRTAKKEESQDLCLADHYGSMKAFLDNYLPARQGEIVLQDGKVVGEHDGIEHFTIGQRKGLGVAWREPLHVVQLDAAANRVIVAPRAEAGRDNCVVGAVNWISMAPPSTTINVEVQVRYRSGPVAAQLTPIEATAEDIAADRPHRCRLTFNEKQFSITPGQAAVFYAADTVLGGGLIQQVNTASS.

Residues 40 to 47 (GLSGGVDS) and L66 contribute to the ATP site. Catalysis depends on C127, which acts as the Nucleophile. A disulfide bond links C127 and C237. Residue G152 coordinates ATP. The interval 187 to 189 (KDQ) is interaction with tRNA. The active-site Cysteine persulfide intermediate is C237. An interaction with tRNA region spans residues 342–343 (RY).

The protein belongs to the MnmA/TRMU family.

It localises to the cytoplasm. The enzyme catalyses S-sulfanyl-L-cysteinyl-[protein] + uridine(34) in tRNA + AH2 + ATP = 2-thiouridine(34) in tRNA + L-cysteinyl-[protein] + A + AMP + diphosphate + H(+). In terms of biological role, catalyzes the 2-thiolation of uridine at the wobble position (U34) of tRNA, leading to the formation of s(2)U34. The sequence is that of tRNA-specific 2-thiouridylase MnmA from Prochlorococcus marinus (strain MIT 9313).